The following is an 877-amino-acid chain: Dynamin (877 aa).

One can recognise a Dynamin-type G domain in the interval 23–289; that stretch reads QLDLPQIAVV…LTNHIRDTLP (267 aa). The G1 motif stretch occupies residues 33 to 40; the sequence is GGQSAGKS. Residue 33-41 coordinates GTP; the sequence is GGQSAGKSS. Residues 59-61 form a G2 motif region; that stretch reads VTR. Residues 131–134 form a G3 motif region; sequence DLPG. Residues 200–203 form a G4 motif region; that stretch reads TKLD. GTP contacts are provided by residues 200-206 and 231-234; these read TKLDLMD and NRSQ. A G5 motif region spans residues 230 to 233; it reads VNRS. Residues 513 to 621 form the PH domain; that stretch reads QVIRKGHMVI…WKASFLRAGV (109 aa). 2 disordered regions span residues 623 to 648 and 740 to 834; these read PEKQ…QLER and TVSS…SGAV. The segment covering 630–641 has biased composition (acidic residues); it reads ENGDESASEESS. Residues 650 to 741 enclose the GED domain; the sequence is VETIRNLVDS…IIGDVSMATV (92 aa). Phosphoserine occurs at positions 756, 764, and 767. A compositionally biased stretch (pro residues) spans 788–826; it reads PPLPPSTGRPAPAIPNRPGGGAPPLPGGRPGGSLPPPML.

The protein belongs to the TRAFAC class dynamin-like GTPase superfamily. Dynamin/Fzo/YdjA family.

The protein localises to the cytoplasm. It is found in the cytoskeleton. The catalysed reaction is GTP + H2O = GDP + phosphate + H(+). Microtubule-associated force-producing protein which is involved in the production of microtubule bundles and which is able to bind and hydrolyze GTP. Implicated in endocytic protein sorting. The chain is Dynamin (shi) from Drosophila melanogaster (Fruit fly).